The primary structure comprises 765 residues: Palmitoyltransferase ZDHHC8 (765 aa).

Over 1–13 (MPRSPGTRLKPAK) the chain is Cytoplasmic. Residues 14–34 (YIPVATAAALLVGSSTLFFVF) traverse the membrane as a helical segment. The Lumenal portion of the chain corresponds to 35–52 (TCPWLTRAVSPAVPVYNG). The chain crosses the membrane as a helical span at residues 53 to 73 (IIFLFVLANFSMATFMDPGVF). The Cytoplasmic segment spans residues 74–148 (PRADEDEDKE…NCIGRRNYRY (75 aa)). Positions 104–154 (KWCATCHFYRPPRCSHCSVCDNCVEDFDHHCPWVNNCIGRRNYRYFFLFLL) constitute a DHHC domain. Cysteine 134 acts as the S-palmitoyl cysteine intermediate in catalysis. The helical transmembrane segment at 149–169 (FFLFLLSLSAHMVGVVAFGLV) threads the bilayer. The Lumenal segment spans residues 170 to 190 (YVLNHAEGLGAAHTTITMAVM). A helical membrane pass occupies residues 191–211 (CVAGLFFIPVIGLTGFHVVLV). The Cytoplasmic segment spans residues 212 to 765 (TRGRTTNEQV…VGGTTYEISV (554 aa)). A disordered region spans residues 293–352 (GLGRSKSKGSLDRLDEKPLDLGPPLPPKIEAGTFSSDLQTPRPGSAESALSVQRTSPPTP). Over residues 301–311 (GSLDRLDEKPL) the composition is skewed to basic and acidic residues. A Phosphoserine modification is found at serine 337. Arginine 441 is subject to Omega-N-methylarginine. Residues 509 to 540 (LHPGATGDPPRPLPRSFSPVLGPRPREPSPVR) form a disordered region. Phosphoserine occurs at positions 606, 627, 675, 682, 725, and 743. A disordered region spans residues 613–747 (GPGFGGARNP…PGPSASPTRH (135 aa)). Residues 622–653 (PALQTSLSSLSSSVSRAPRTSSSSLQADQASS) show a composition bias toward low complexity.

Belongs to the DHHC palmitoyltransferase family. ERF2/ZDHHC9 subfamily. In terms of tissue distribution, widely expressed.

It localises to the golgi apparatus membrane. Its subcellular location is the mitochondrion membrane. The enzyme catalyses L-cysteinyl-[protein] + hexadecanoyl-CoA = S-hexadecanoyl-L-cysteinyl-[protein] + CoA. Its function is as follows. Palmitoyltransferase that catalyzes the addition of palmitate onto various protein substrates and therefore functions in several unrelated biological processes. Through the palmitoylation of ABCA1 regulates the localization of the transporter to the plasma membrane and thereby regulates its function in cholesterol and phospholipid efflux. Could also pamitoylate the D(2) dopamine receptor DRD2 and regulate its stability and localization to the plasma membrane. Could also play a role in glutamatergic transmission. (Microbial infection) Able to palmitoylate SARS coronavirus-2/SARS-CoV-2 spike protein following its synthesis in the endoplasmic reticulum (ER). In the infected cell, promotes spike biogenesis by protecting it from premature ER degradation, increases half-life and controls the lipid organization of its immediate membrane environment. Once the virus has formed, spike palmitoylation controls fusion with the target cell. This Homo sapiens (Human) protein is Palmitoyltransferase ZDHHC8.